The sequence spans 308 residues: Methionyl-tRNA formyltransferase (308 aa).

Residue 109–112 (SLLP) coordinates (6S)-5,6,7,8-tetrahydrofolate.

Belongs to the Fmt family.

It carries out the reaction L-methionyl-tRNA(fMet) + (6R)-10-formyltetrahydrofolate = N-formyl-L-methionyl-tRNA(fMet) + (6S)-5,6,7,8-tetrahydrofolate + H(+). In terms of biological role, attaches a formyl group to the free amino group of methionyl-tRNA(fMet). The formyl group appears to play a dual role in the initiator identity of N-formylmethionyl-tRNA by promoting its recognition by IF2 and preventing the misappropriation of this tRNA by the elongation apparatus. This is Methionyl-tRNA formyltransferase from Rhizorhabdus wittichii (strain DSM 6014 / CCUG 31198 / JCM 15750 / NBRC 105917 / EY 4224 / RW1) (Sphingomonas wittichii).